Here is a 200-residue protein sequence, read N- to C-terminus: Probable molybdenum cofactor guanylyltransferase (200 aa).

Residues L9–G11, K21, D69, and D100 contribute to the GTP site. D100 serves as a coordination point for Mg(2+).

Belongs to the MobA family. It depends on Mg(2+) as a cofactor.

It localises to the cytoplasm. The catalysed reaction is Mo-molybdopterin + GTP + H(+) = Mo-molybdopterin guanine dinucleotide + diphosphate. Transfers a GMP moiety from GTP to Mo-molybdopterin (Mo-MPT) cofactor (Moco or molybdenum cofactor) to form Mo-molybdopterin guanine dinucleotide (Mo-MGD) cofactor. This chain is Probable molybdenum cofactor guanylyltransferase, found in Bacillus cereus (strain AH187).